Here is an 84-residue protein sequence, read N- to C-terminus: Small ribosomal subunit protein uS17 (84 aa).

This sequence belongs to the universal ribosomal protein uS17 family. Part of the 30S ribosomal subunit.

In terms of biological role, one of the primary rRNA binding proteins, it binds specifically to the 5'-end of 16S ribosomal RNA. This Citrobacter koseri (strain ATCC BAA-895 / CDC 4225-83 / SGSC4696) protein is Small ribosomal subunit protein uS17.